Consider the following 460-residue polypeptide: Bifunctional protein GlmU (460 aa).

The segment at 1-230 (MSNNYAIILA…FDESLGVNDR (230 aa)) is pyrophosphorylase. Residues 9–12 (LAAG), Lys-23, Gln-73, and 78–79 (GT) contribute to the UDP-N-acetyl-alpha-D-glucosamine site. Asp-103 contributes to the Mg(2+) binding site. The UDP-N-acetyl-alpha-D-glucosamine site is built by Gly-140, Glu-155, Asn-170, and Asn-228. Asn-228 is a binding site for Mg(2+). The interval 231–251 (VALATAEAVMRKRINEKHMVN) is linker. Residues 252-460 (GVTFINPDAT…TRFPFHPSQK (209 aa)) are N-acetyltransferase. UDP-N-acetyl-alpha-D-glucosamine-binding residues include Arg-333 and Lys-351. Residue His-363 is the Proton acceptor of the active site. UDP-N-acetyl-alpha-D-glucosamine is bound by residues Tyr-366 and Asn-377. Residues Ala-380, 386–387 (NY), Ser-405, Ala-423, and Arg-440 contribute to the acetyl-CoA site.

It in the N-terminal section; belongs to the N-acetylglucosamine-1-phosphate uridyltransferase family. In the C-terminal section; belongs to the transferase hexapeptide repeat family. As to quaternary structure, homotrimer. The cofactor is Mg(2+).

It is found in the cytoplasm. The enzyme catalyses alpha-D-glucosamine 1-phosphate + acetyl-CoA = N-acetyl-alpha-D-glucosamine 1-phosphate + CoA + H(+). It carries out the reaction N-acetyl-alpha-D-glucosamine 1-phosphate + UTP + H(+) = UDP-N-acetyl-alpha-D-glucosamine + diphosphate. It functions in the pathway nucleotide-sugar biosynthesis; UDP-N-acetyl-alpha-D-glucosamine biosynthesis; N-acetyl-alpha-D-glucosamine 1-phosphate from alpha-D-glucosamine 6-phosphate (route II): step 2/2. It participates in nucleotide-sugar biosynthesis; UDP-N-acetyl-alpha-D-glucosamine biosynthesis; UDP-N-acetyl-alpha-D-glucosamine from N-acetyl-alpha-D-glucosamine 1-phosphate: step 1/1. The protein operates within bacterial outer membrane biogenesis; LPS lipid A biosynthesis. Catalyzes the last two sequential reactions in the de novo biosynthetic pathway for UDP-N-acetylglucosamine (UDP-GlcNAc). The C-terminal domain catalyzes the transfer of acetyl group from acetyl coenzyme A to glucosamine-1-phosphate (GlcN-1-P) to produce N-acetylglucosamine-1-phosphate (GlcNAc-1-P), which is converted into UDP-GlcNAc by the transfer of uridine 5-monophosphate (from uridine 5-triphosphate), a reaction catalyzed by the N-terminal domain. This Streptococcus suis (strain 98HAH33) protein is Bifunctional protein GlmU.